Consider the following 146-residue polypeptide: Leptin (146 aa).

A disulfide bridge links Cys-96 with Cys-146.

This sequence belongs to the leptin family.

The protein resides in the secreted. Functionally, key player in the regulation of energy balance and body weight control. Once released into the circulation, has central and peripheral effects by binding LEPR, found in many tissues, which results in the activation of several major signaling pathways. In the hypothalamus, acts as an appetite-regulating factor that induces a decrease in food intake and an increase in energy consumption by inducing anorexinogenic factors and suppressing orexigenic neuropeptides, also regulates bone mass and secretion of hypothalamo-pituitary-adrenal hormones. In the periphery, increases basal metabolism, influences reproductive function, regulates pancreatic beta-cell function and insulin secretion, is pro-angiogenic for endothelial cell and affects innate and adaptive immunity. In the arcuate nucleus of the hypothalamus, activates by depolarization POMC neurons inducing FOS and SOCS3 expression to release anorexigenic peptides and inhibits by hyperpolarization NPY neurons inducing SOCS3 with a consequent reduction on release of orexigenic peptides. In addition to its known satiety inducing effect, has a modulatory role in nutrient absorption. In the intestine, reduces glucose absorption by enterocytes by activating PKC and leading to a sequential activation of p38, PI3K and ERK signaling pathways which exerts an inhibitory effect on glucose absorption. Acts as a growth factor on certain tissues, through the activation of different signaling pathways increases expression of genes involved in cell cycle regulation such as CCND1, via JAK2-STAT3 pathway, or VEGFA, via MAPK1/3 and PI3K-AKT1 pathways. May also play an apoptotic role via JAK2-STAT3 pathway and up-regulation of BIRC5 expression. Pro-angiogenic, has mitogenic activity on vascular endothelial cells and plays a role in matrix remodeling by regulating the expression of matrix metalloproteinases (MMPs) and tissue inhibitors of metalloproteinases (TIMPs). In innate immunity, modulates the activity and function of neutrophils by increasing chemotaxis and the secretion of oxygen radicals. Increases phagocytosis by macrophages and enhances secretion of pro-inflammatory mediators. Increases cytotoxic ability of NK cells. Plays a pro-inflammatory role, in synergy with IL1B, by inducing NOS2 which promotes the production of IL6, IL8 and Prostaglandin E2, through a signaling pathway that involves JAK2, PI3K, MAP2K1/MEK1 and MAPK14/p38. In adaptive immunity, promotes the switch of memory T-cells towards T helper-1 cell immune responses. Increases CD4(+)CD25(-) T-cell proliferation and reduces autophagy during TCR (T-cell receptor) stimulation, through MTOR signaling pathway activation and BCL2 up-regulation. The polypeptide is Leptin (LEP) (Gorilla gorilla gorilla (Western lowland gorilla)).